We begin with the raw amino-acid sequence, 150 residues long: Transmembrane protein PMIS2 (150 aa).

The segment covering 1–12 (MALKPPSATQPA) has biased composition (low complexity). The tract at residues 1–61 (MALKPPSATQ…EPQEPTQTPE (61 aa)) is disordered. Over residues 13–22 (PNAPATPDAP) the composition is skewed to pro residues. The span at 23-61 (PTTGDPGASAAPGSPTTTGGPGAPAEVPQEPQEPTQTPE) shows a compositional bias: low complexity. A run of 2 helical transmembrane segments spans residues 71 to 91 (LCLT…ALYF) and 130 to 150 (GWFG…LVLY).

It belongs to the CD225/Dispanin family.

The protein localises to the membrane. In terms of biological role, may play a role in spermatozoa mobility. This is Transmembrane protein PMIS2 from Homo sapiens (Human).